Consider the following 467-residue polypeptide: Serine/threonine-protein phosphatase 2A 56 kDa regulatory subunit epsilon isoform (467 aa).

The disordered stretch occupies residues 1 to 39 (MSSAPTTPPSVDKVDGFSRKSVRKARQKRSQSSSQFRSQ). At S2 the chain carries N-acetylserine. Residue T7 is modified to Phosphothreonine. Over residues 20–29 (KSVRKARQKR) the composition is skewed to basic residues. S30, S32, and S34 each carry phosphoserine. A compositionally biased stretch (low complexity) spans 30–39 (SQSSSQFRSQ).

Belongs to the phosphatase 2A regulatory subunit B56 family. As to quaternary structure, PP2A consists of a common heterodimeric core enzyme, composed of a 36 kDa catalytic subunit (subunit C) and a 65 kDa constant regulatory subunit (PR65 or subunit A), that associates with a variety of regulatory subunits. Proteins that associate with the core dimer include three families of regulatory subunits B (the R2/B/PR55/B55, R3/B''/PR72/PR130/PR59 and R5/B'/B56 families), the 48 kDa variable regulatory subunit, viral proteins, and cell signaling molecules. Interacts with SGO1. Found in a complex with at least ARL2, PPP2CB; PPP2R1A, PPP2R2A, PPP2R5E and TBCD.

The protein resides in the cytoplasm. Its function is as follows. The B regulatory subunit might modulate substrate selectivity and catalytic activity, and might also direct the localization of the catalytic enzyme to a particular subcellular compartment. Interacts with cyclin G in vitro. The sequence is that of Serine/threonine-protein phosphatase 2A 56 kDa regulatory subunit epsilon isoform (Ppp2r5e) from Mus musculus (Mouse).